A 96-amino-acid chain; its full sequence is Small, acid-soluble spore protein gamma-type (96 aa).

The segment covering 1–15 has biased composition (polar residues); the sequence is MNTKNFTPQESRTNA. Residues 1-96 are disordered; that stretch reads MNTKNFTPQE…SEAKKRNNQQ (96 aa). The span at 16–27 shows a compositional bias: low complexity; it reads QQVRQQNQQSAQ. Residues 28–41 are compositionally biased toward polar residues; it reads GTSSGFATEFASET. 2 consecutive repeats follow at residues 28–52 and 61–87; these read GTSS…QNQQ and GATA…NQQS. 2 stretches are compositionally biased toward low complexity: residues 42–57 and 76–86; these read NAQQ…AQAN and NVQQVRQQNQQ.

It belongs to the gamma-type SASP family.

Its function is as follows. SASP are proteins degraded in the first minutes of spore germination and provide amino acids for both new protein synthesis and metabolism. These proteins may be involved in dormant spore's high resistance to UV light. This Laceyella sacchari (Thermoactinomyces thalpophilus) protein is Small, acid-soluble spore protein gamma-type.